The chain runs to 723 residues: CSC1-like protein ERD4 (723 aa).

At 1–5 (MEFAS) the chain is on the cytoplasmic side. The helical transmembrane segment at 6–26 (FLVSLGTSAIIFVVLMFLFTW) threads the bilayer. Topologically, residues 27 to 90 (LSRRPGNVPV…TAVYFVFQST (64 aa)) are extracellular. Residues 91–111 (VLGIFALSALLLLPTLLPIAA) form a helical membrane-spanning segment. The Cytoplasmic segment spans residues 112–148 (TDNNLETSRSATDTTSNGTFSQLDNLSMANITKSSSR). A helical membrane pass occupies residues 149–169 (LWAFLGAVYWVSVVTYFMLWK). At 170-364 (AYKHVAALRA…IKFFSRIVRQ (195 aa)) the chain is on the extracellular side. The chain crosses the membrane as a helical span at residues 365 to 385 (YVIYFLVAITILFYMIPIAFV). At 386 to 416 (SAITTLANLQKALPFLKPIVDIAFIRTILES) the chain is on the cytoplasmic side. The chain crosses the membrane as a helical span at residues 417–437 (YLPQIALIVFLAMLPKFLMFL). At 438-456 (SKSEGIPSQSHAIRATSGK) the chain is on the extracellular side. A helical transmembrane segment spans residues 457–477 (YFYFSVLNVFIGVTLAGSLFE). Topologically, residues 478–508 (NLKALEEKPNSFITLLATSLPKSATFFLTYV) are cytoplasmic. Residues 509–529 (ALKFFVGYGLELSRIIPLIIF) traverse the membrane as a helical segment. The Extracellular segment spans residues 530–572 (HLKKKYLCKTEAEVKEAWYPGDLSYATRVPSDMLILTITFCYS). The chain crosses the membrane as a helical span at residues 573-593 (VIAPLILVFGVIYFGLGWLIL). Topologically, residues 594–614 (RNQALKVYVPSYESYGRMWPH) are cytoplasmic. The chain crosses the membrane as a helical span at residues 615–635 (IHTRILAALFLFQLVMFGYLG). Topologically, residues 636-637 (VK) are extracellular. Residues 638–658 (IFVWAILLVPLIFISLIFGYV) traverse the membrane as a helical segment. Over 659-723 (CRQKFYGGFE…YQDYAAISAA (65 aa)) the chain is Cytoplasmic.

The protein belongs to the CSC1 (TC 1.A.17) family.

Its subcellular location is the plastid. It is found in the chloroplast membrane. Its function is as follows. Acts as an osmosensitive calcium-permeable cation channel. This Brassica juncea (Indian mustard) protein is CSC1-like protein ERD4 (ERD4).